The sequence spans 339 residues: UDP-N-acetylenolpyruvoylglucosamine reductase (339 aa).

An FAD-binding PCMH-type domain is found at 16-188; it reads GIAATARYYS…LQVTLRLNKQ (173 aa). Arg164 is an active-site residue. Ser238 (proton donor) is an active-site residue. Glu334 is a catalytic residue.

The protein belongs to the MurB family. The cofactor is FAD.

The protein localises to the cytoplasm. The catalysed reaction is UDP-N-acetyl-alpha-D-muramate + NADP(+) = UDP-N-acetyl-3-O-(1-carboxyvinyl)-alpha-D-glucosamine + NADPH + H(+). The protein operates within cell wall biogenesis; peptidoglycan biosynthesis. Its function is as follows. Cell wall formation. In Amoebophilus asiaticus (strain 5a2), this protein is UDP-N-acetylenolpyruvoylglucosamine reductase.